We begin with the raw amino-acid sequence, 562 residues long: MNSDSVENLFISRISKDDPEAIFQIVEVVGSGSFGTVCACRWMKKKDRESNGNRLIACKFVEVNADDVETNLNLVKEIDILKESMDCPYIVEYKGCYLKSSMLLIVMEYCKGGSLLDIIELCGKRLIEEEIAAVCAGVVKGLVYLHSKRTTHRDIKAGNVLLDEEGLPKLADFGVSTIAEQGQKMNTVIGSPYWMAPEIIMGQGYDQKADIWSLGITAIEIAELVPPRFDVPPSRVIFTIPHQPPPSLKIPSDWSPEFNDFVKQCLSMNPALRPSAQQLLSHPFILKGSSQQILQKLVNESIPLLKEKRAEKIRQLEEQEQQRNSSGSKMVSSVPTRASQALTNVRNAESLKGSVVILNSNTKTASIMRNKNPQPPPPSHSSGAGGAAGSTRRVPGNKSVLNRYPPANNVSNGTIAPSPINNNNNNNNTTTKVGKVSSPFLQQQQQQQQQNNNKNPPPKPTTPSPNKKIGDNISKTTPTTPTTTQPNTSTTTKTGSSLNIKPTNNVNRSTISIGQQKSPLQSSEREASYDEESVSVIYHGSEDEEDEEEFNHEDYEEINVNI.

The Protein kinase domain maps to 23–285 (FQIVEVVGSG…AQQLLSHPFI (263 aa)). ATP-binding positions include 29-37 (VGSGSFGTV) and lysine 59. Aspartate 154 acts as the Proton acceptor in catalysis. Disordered regions lie at residues 316-339 (LEEQ…TRAS) and 366-562 (SIMR…NVNI). Positions 322-339 (QRNSSGSKMVSSVPTRAS) are enriched in polar residues. 3 stretches are compositionally biased toward low complexity: residues 421-431 (NNNNNNNNTTT), 442-454 (QQQQ…NNNK), and 476-494 (TTPT…TTKT). A compositionally biased stretch (polar residues) spans 495–522 (GSSLNIKPTNNVNRSTISIGQQKSPLQS). The segment covering 542–562 (EDEEDEEEFNHEDYEEINVNI) has biased composition (acidic residues).

This sequence belongs to the protein kinase superfamily. STE Ser/Thr protein kinase family. STE20 subfamily. Mg(2+) is required as a cofactor.

It catalyses the reaction L-seryl-[protein] + ATP = O-phospho-L-seryl-[protein] + ADP + H(+). It carries out the reaction L-threonyl-[protein] + ATP = O-phospho-L-threonyl-[protein] + ADP + H(+). This chain is Serine/threonine-protein kinase dst3, found in Dictyostelium discoideum (Social amoeba).